A 91-amino-acid polypeptide reads, in one-letter code: MSEPDVKSHKIEFPCADYPIKVIGDTVVGFKDMVIEVLSKHAKVDLATLAERQSKEGKYTTVQLHIVAESENQLHDINSALRATGIVKMVL.

The protein belongs to the UPF0250 family.

The chain is UPF0250 protein PputW619_0619 from Pseudomonas putida (strain W619).